The chain runs to 1057 residues: Carbamoyl phosphate synthase large chain (1057 aa).

A carboxyphosphate synthetic domain region spans residues 1 to 401; the sequence is MPKRQDIETI…SLLKAIRSLE (401 aa). Residues Arg129, Arg169, Gly175, Gly176, Lys208, Ile210, Glu215, Gly241, Ile242, His243, Gln284, and Glu298 each coordinate ATP. Residues 133–327 form the ATP-grasp 1 domain; sequence RTLMNDLGVP…IAKLAAKIAI (195 aa). Mg(2+) contacts are provided by Gln284, Glu298, and Asn300. Mn(2+) contacts are provided by Gln284, Glu298, and Asn300. Positions 402-546 are oligomerization domain; that stretch reads YGVHHLGLPN…YGTYEYENES (145 aa). The segment at 547 to 929 is carbamoyl phosphate synthetic domain; it reads VVTEKEKILV…ALFKGLTASG (383 aa). The 191-residue stretch at 671-861 folds into the ATP-grasp 2 domain; that stretch reads EALLHTIDVP…MAQLAMRAII (191 aa). The ATP site is built by Arg707, Arg746, Leu748, Glu752, Gly777, Val778, His779, Ser780, Gln820, and Glu832. Residues Gln820, Glu832, and Asn834 each contribute to the Mg(2+) site. 3 residues coordinate Mn(2+): Gln820, Glu832, and Asn834. The 128-residue stretch at 930–1057 folds into the MGS-like domain; that stretch reads MEVKDHGTVL…ESMTFTMKNM (128 aa). The interval 930–1057 is allosteric domain; sequence MEVKDHGTVL…ESMTFTMKNM (128 aa).

The protein belongs to the CarB family. As to quaternary structure, composed of two chains; the small (or glutamine) chain promotes the hydrolysis of glutamine to ammonia, which is used by the large (or ammonia) chain to synthesize carbamoyl phosphate. Tetramer of heterodimers (alpha,beta)4. Requires Mg(2+) as cofactor. It depends on Mn(2+) as a cofactor.

It carries out the reaction hydrogencarbonate + L-glutamine + 2 ATP + H2O = carbamoyl phosphate + L-glutamate + 2 ADP + phosphate + 2 H(+). It catalyses the reaction hydrogencarbonate + NH4(+) + 2 ATP = carbamoyl phosphate + 2 ADP + phosphate + 2 H(+). It functions in the pathway amino-acid biosynthesis; L-arginine biosynthesis; carbamoyl phosphate from bicarbonate: step 1/1. The protein operates within pyrimidine metabolism; UMP biosynthesis via de novo pathway; (S)-dihydroorotate from bicarbonate: step 1/3. Its function is as follows. Large subunit of the glutamine-dependent carbamoyl phosphate synthetase (CPSase). CPSase catalyzes the formation of carbamoyl phosphate from the ammonia moiety of glutamine, carbonate, and phosphate donated by ATP, constituting the first step of 2 biosynthetic pathways, one leading to arginine and/or urea and the other to pyrimidine nucleotides. The large subunit (synthetase) binds the substrates ammonia (free or transferred from glutamine from the small subunit), hydrogencarbonate and ATP and carries out an ATP-coupled ligase reaction, activating hydrogencarbonate by forming carboxy phosphate which reacts with ammonia to form carbamoyl phosphate. The sequence is that of Carbamoyl phosphate synthase large chain from Staphylococcus saprophyticus subsp. saprophyticus (strain ATCC 15305 / DSM 20229 / NCIMB 8711 / NCTC 7292 / S-41).